A 444-amino-acid chain; its full sequence is S-locus-specific glycoprotein (444 aa).

Residues 1–28 form the signal peptide; the sequence is MRGVIPNYHHSYTLFFFVILVLFPHVFS. Residues 31-159 enclose the Bulb-type lectin domain; sequence TLSPNEALTI…KTNDLDRFMW (129 aa). Asn-43, Asn-125, Asn-243, and Asn-396 each carry an N-linked (GlcNAc...) asparagine glycan. Residues 356–437 form the PAN domain; it reads CGEGDGFLRM…GGQDLYVKVA (82 aa). 2 disulfide bridges follow: Cys-387/Cys-412 and Cys-395/Cys-397.

In terms of tissue distribution, stigma.

Its function is as follows. Involved in sporophytic self-incompatibility system (the inability of flowering plants to achieve self-fertilization). This is S-locus-specific glycoprotein (SLSG) from Brassica oleracea var. alboglabra (Chinese kale).